A 651-amino-acid chain; its full sequence is MSRGPAGAWVALGPLLWTCGLALEGGMLYPRESPSRERKDLDGLWSFRADFSDGRRQGFEQQWYRAPLRESGPTLDMPVPSSFNDVGQDRQLRSFVGWVWYEREATLPRRWSQDPGTRVVLRIGSAHYYAIVWVNGVHVAEHEGGHLPFEADISKLVQSGPLSSCRITLAINNTLTPHTLPPGTIVYKTDASKYPKGYFVQNTYFDFFNYAGLHRPVLLYTTPTTYIDDITVTTGVDQDTGLVDYQIFVQGSEHFQLEVYLLDEEGKVVAQGTGSQGRLQVPNVHLWWPYLMHEHPAYLYSLEVRLTAQMAAGPVSDFYTLPVGIRTVAVTERQFLINGKPFYFHGVNKHEDADIRGKGFDWPLLVKDFNLLRWLGANAFRTSHYPYAEEVMQLCDRYGIVVIDESPGVGIMLVQSYSNVSLQHHLEVMGELVRRDKNHPSVVMWSVANEPTSFLKPAAYYFKTLIAHTKALDPSRPVTFVTNSNYEADLGAPYVDVICVNSYYSWYHDYGHMEVIQLQLATEFENWYRTYQKPIIQSEYGAETIAGFHQDPPLMFSEEYQKGLLEQYHLVLDQKRKEYVVGELIWNFADFMTDQSPQRAVGNRKGIFTRQRQPKAAAFLLRERYWKLANETGHHRSAAKSQCLENSPFAL.

The N-terminal stretch at 1-22 (MSRGPAGAWVALGPLLWTCGLA) is a signal peptide. Residues N172 and N419 are each glycosylated (N-linked (GlcNAc...) asparagine). Catalysis depends on E450, which acts as the Proton donor. N-linked (GlcNAc...) asparagine glycosylation occurs at N630.

This sequence belongs to the glycosyl hydrolase 2 family. In terms of assembly, homotetramer.

It localises to the lysosome. The catalysed reaction is a beta-D-glucuronoside + H2O = D-glucuronate + an alcohol. Its activity is regulated as follows. Inhibited by L-aspartic acid. Plays an important role in the degradation of dermatan and keratan sulfates. This Canis lupus familiaris (Dog) protein is Beta-glucuronidase (GUSB).